We begin with the raw amino-acid sequence, 481 residues long: Glutamyl-tRNA(Gln) amidotransferase subunit A (481 aa).

Residues lysine 74 and serine 149 each act as charge relay system in the active site. The active-site Acyl-ester intermediate is the serine 173.

It belongs to the amidase family. GatA subfamily. Heterotrimer of A, B and C subunits.

It carries out the reaction L-glutamyl-tRNA(Gln) + L-glutamine + ATP + H2O = L-glutaminyl-tRNA(Gln) + L-glutamate + ADP + phosphate + H(+). Its function is as follows. Allows the formation of correctly charged Gln-tRNA(Gln) through the transamidation of misacylated Glu-tRNA(Gln) in organisms which lack glutaminyl-tRNA synthetase. The reaction takes place in the presence of glutamine and ATP through an activated gamma-phospho-Glu-tRNA(Gln). The chain is Glutamyl-tRNA(Gln) amidotransferase subunit A from Francisella philomiragia subsp. philomiragia (strain ATCC 25017 / CCUG 19701 / FSC 153 / O#319-036).